A 767-amino-acid polypeptide reads, in one-letter code: Cilium assembly protein DZIP1L (767 aa).

Residues 122–144 (QQRGQQELGRQADELKGVREESR) form a disordered region. The segment covering 131-144 (RQADELKGVREESR) has biased composition (basic and acidic residues). The C2H2-type zinc-finger motif lies at 166–189 (HTCHLCDKTFMNATFLRGHIQRRH). The stretch at 205-406 (VEEVLEELRA…SQEEMIQSLS (202 aa)) forms a coiled coil. At S426 the chain carries Phosphoserine. The segment at 518-767 (SRAKERQENG…SSGQPRVPAW (250 aa)) is disordered. Composition is skewed to polar residues over residues 533–547 (PDGQPSVKSQQSTLV) and 574–588 (RQSHGSHGSSLTQVS). The span at 607–616 (GPGMSTPPFS) shows a compositional bias: low complexity. Residues 658-675 (ENAQPPGQGSGTLVQSMV) are compositionally biased toward polar residues. Residues 677-686 (NLEKQLEAPA) show a composition bias toward basic and acidic residues.

The protein belongs to the DZIP C2H2-type zinc-finger protein family. Interacts with SEPTIN2.

The protein resides in the cytoplasm. The protein localises to the cytoskeleton. It localises to the cilium basal body. It is found in the microtubule organizing center. Its subcellular location is the centrosome. The protein resides in the centriole. Its function is as follows. Involved in primary cilium formation. Probably acts as a transition zone protein required for localization of PKD1/PC1 and PKD2/PC2 to the ciliary membrane. In Homo sapiens (Human), this protein is Cilium assembly protein DZIP1L.